A 488-amino-acid polypeptide reads, in one-letter code: Probable glycine dehydrogenase (decarboxylating) subunit 2 (488 aa).

Position 274 is an N6-(pyridoxal phosphate)lysine (Lys274).

It belongs to the GcvP family. C-terminal subunit subfamily. As to quaternary structure, the glycine cleavage system is composed of four proteins: P, T, L and H. In this organism, the P 'protein' is a heterodimer of two subunits. Pyridoxal 5'-phosphate serves as cofactor.

The enzyme catalyses N(6)-[(R)-lipoyl]-L-lysyl-[glycine-cleavage complex H protein] + glycine + H(+) = N(6)-[(R)-S(8)-aminomethyldihydrolipoyl]-L-lysyl-[glycine-cleavage complex H protein] + CO2. Functionally, the glycine cleavage system catalyzes the degradation of glycine. The P protein binds the alpha-amino group of glycine through its pyridoxal phosphate cofactor; CO(2) is released and the remaining methylamine moiety is then transferred to the lipoamide cofactor of the H protein. In Listeria welshimeri serovar 6b (strain ATCC 35897 / DSM 20650 / CCUG 15529 / CIP 8149 / NCTC 11857 / SLCC 5334 / V8), this protein is Probable glycine dehydrogenase (decarboxylating) subunit 2.